A 274-amino-acid polypeptide reads, in one-letter code: uncharacterized protein (274 aa).

The protein belongs to the class IV-like SAM-binding methyltransferase superfamily. RNA methyltransferase TrmH family.

This is an uncharacterized protein from Synechocystis sp. (strain ATCC 27184 / PCC 6803 / Kazusa).